A 37-amino-acid chain; its full sequence is Disintegrin morulustatin (37 aa).

3 cysteine pairs are disulfide-bonded: Cys12–Cys16, Cys22–Cys36, and Cys24–Cys31.

Belongs to the venom metalloproteinase (M12B) family. P-II subfamily. P-IIa sub-subfamily. In terms of tissue distribution, expressed by the venom gland.

It is found in the secreted. In terms of biological role, inhibits ADP-induced platelet aggregation in human whole blood in a concentration-dependent manner (IC(50)=89.5 nM). The protein is Disintegrin morulustatin of Crotalus morulus (Tamaulipan rock rattlesnake).